The sequence spans 184 residues: Ribosome-recycling factor (184 aa).

Belongs to the RRF family.

The protein localises to the cytoplasm. Responsible for the release of ribosomes from messenger RNA at the termination of protein biosynthesis. May increase the efficiency of translation by recycling ribosomes from one round of translation to another. The sequence is that of Ribosome-recycling factor from Acinetobacter baumannii (strain SDF).